The sequence spans 211 residues: Endonuclease III (211 aa).

The HhH domain maps to 108–127; the sequence is RAALEALPGVGRKTANVVLN. [4Fe-4S] cluster is bound by residues cysteine 187, cysteine 194, cysteine 197, and cysteine 203.

Belongs to the Nth/MutY family. It depends on [4Fe-4S] cluster as a cofactor.

It catalyses the reaction 2'-deoxyribonucleotide-(2'-deoxyribose 5'-phosphate)-2'-deoxyribonucleotide-DNA = a 3'-end 2'-deoxyribonucleotide-(2,3-dehydro-2,3-deoxyribose 5'-phosphate)-DNA + a 5'-end 5'-phospho-2'-deoxyribonucleoside-DNA + H(+). Functionally, DNA repair enzyme that has both DNA N-glycosylase activity and AP-lyase activity. The DNA N-glycosylase activity releases various damaged pyrimidines from DNA by cleaving the N-glycosidic bond, leaving an AP (apurinic/apyrimidinic) site. The AP-lyase activity cleaves the phosphodiester bond 3' to the AP site by a beta-elimination, leaving a 3'-terminal unsaturated sugar and a product with a terminal 5'-phosphate. In Escherichia coli O6:H1 (strain CFT073 / ATCC 700928 / UPEC), this protein is Endonuclease III.